The primary structure comprises 83 residues: Mu-theraphotoxin-Hhn2b 1 (83 aa).

A signal peptide spans 1 to 21; the sequence is MKASMFLALAGLVLLFVVCYA. Residues 22–48 constitute a propeptide that is removed on maturation; it reads SESEEKEFPRELISKIFAVDDFKGEER. Cystine bridges form between cysteine 50-cysteine 65, cysteine 57-cysteine 70, and cysteine 64-cysteine 77. Leucine 81 bears the Leucine amide mark.

Belongs to the neurotoxin 10 (Hwtx-1) family. 14 (Hntx-1) subfamily. As to quaternary structure, monomer. As to expression, expressed by the venom gland.

It is found in the secreted. Weakly blocks the rat SCN2A/SCN1B (Nav1.2/beta-1) sodium channel (IC(50)=68 uM) and the insect sodium channel para/tipE (IC(50)=4.3 uM), without altering the activation or inactivation kinetics (depressant toxin). The sequence is that of Mu-theraphotoxin-Hhn2b 1 from Cyriopagopus hainanus (Chinese bird spider).